The sequence spans 125 residues: Large ribosomal subunit protein bL12 (125 aa).

As to quaternary structure, homodimer. Part of the ribosomal stalk of the 50S ribosomal subunit. Forms a multimeric L10(L12)X complex, where L10 forms an elongated spine to which 2 to 4 L12 dimers bind in a sequential fashion. Binds GTP-bound translation factors. Two isoforms seem to exist. One is probably dimethylated on Lys-69 and monomethylated on Lys-86 while the other is probably acetylated or trimethylated on both Lys-86 and Lys-89.

Functionally, forms part of the ribosomal stalk which helps the ribosome interact with GTP-bound translation factors. Is thus essential for accurate translation. The chain is Large ribosomal subunit protein bL12 from Rhodopseudomonas palustris (strain ATCC BAA-98 / CGA009).